The primary structure comprises 110 residues: Nucleoid-associated protein KPK_4227 (110 aa).

The segment at 1 to 22 (MFGGKGGLGNLMKQAQQMQDKM) is disordered.

The protein belongs to the YbaB/EbfC family. In terms of assembly, homodimer.

It is found in the cytoplasm. It localises to the nucleoid. Binds to DNA and alters its conformation. May be involved in regulation of gene expression, nucleoid organization and DNA protection. In Klebsiella pneumoniae (strain 342), this protein is Nucleoid-associated protein KPK_4227.